We begin with the raw amino-acid sequence, 210 residues long: V-type sodium ATPase subunit D (210 aa).

It belongs to the V-ATPase D subunit family.

Involved in ATP-driven sodium extrusion. This is V-type sodium ATPase subunit D (ntpD) from Enterococcus hirae (strain ATCC 9790 / DSM 20160 / JCM 8729 / LMG 6399 / NBRC 3181 / NCIMB 6459 / NCDO 1258 / NCTC 12367 / WDCM 00089 / R).